We begin with the raw amino-acid sequence, 119 residues long: Large ribosomal subunit protein uL18 (119 aa).

This sequence belongs to the universal ribosomal protein uL18 family. As to quaternary structure, part of the 50S ribosomal subunit; part of the 5S rRNA/L5/L18/L25 subcomplex. Contacts the 5S and 23S rRNAs.

Functionally, this is one of the proteins that bind and probably mediate the attachment of the 5S RNA into the large ribosomal subunit, where it forms part of the central protuberance. The polypeptide is Large ribosomal subunit protein uL18 (Helicobacter pylori (strain HPAG1)).